We begin with the raw amino-acid sequence, 394 residues long: NAD(P)H-quinone oxidoreductase subunit H (394 aa).

Belongs to the complex I 49 kDa subunit family. As to quaternary structure, NDH-1 can be composed of about 15 different subunits; different subcomplexes with different compositions have been identified which probably have different functions.

It localises to the cellular thylakoid membrane. The catalysed reaction is a plastoquinone + NADH + (n+1) H(+)(in) = a plastoquinol + NAD(+) + n H(+)(out). It catalyses the reaction a plastoquinone + NADPH + (n+1) H(+)(in) = a plastoquinol + NADP(+) + n H(+)(out). Its function is as follows. NDH-1 shuttles electrons from an unknown electron donor, via FMN and iron-sulfur (Fe-S) centers, to quinones in the respiratory and/or the photosynthetic chain. The immediate electron acceptor for the enzyme in this species is believed to be plastoquinone. Couples the redox reaction to proton translocation, and thus conserves the redox energy in a proton gradient. Cyanobacterial NDH-1 also plays a role in inorganic carbon-concentration. This chain is NAD(P)H-quinone oxidoreductase subunit H, found in Picosynechococcus sp. (strain ATCC 27264 / PCC 7002 / PR-6) (Agmenellum quadruplicatum).